Here is a 206-residue protein sequence, read N- to C-terminus: Holliday junction branch migration complex subunit RuvA (206 aa).

A domain I region spans residues 1–64 (MIGRLHGIII…EDAQLLYGFN (64 aa)). The tract at residues 65–143 (TRQERTLFRE…GWISHDLFTP (79 aa)) is domain II. Residues 144-157 (YTDAAPVDHEPSLA) are flexible linker. Residues 158–206 (PADTVESEAVAALLALGYKPQQASLVVSKVIKPEMTVENVIREALRSML) are domain III.

This sequence belongs to the RuvA family. In terms of assembly, homotetramer. Forms an RuvA(8)-RuvB(12)-Holliday junction (HJ) complex. HJ DNA is sandwiched between 2 RuvA tetramers; dsDNA enters through RuvA and exits via RuvB. An RuvB hexamer assembles on each DNA strand where it exits the tetramer. Each RuvB hexamer is contacted by two RuvA subunits (via domain III) on 2 adjacent RuvB subunits; this complex drives branch migration. In the full resolvosome a probable DNA-RuvA(4)-RuvB(12)-RuvC(2) complex forms which resolves the HJ.

Its subcellular location is the cytoplasm. In terms of biological role, the RuvA-RuvB-RuvC complex processes Holliday junction (HJ) DNA during genetic recombination and DNA repair, while the RuvA-RuvB complex plays an important role in the rescue of blocked DNA replication forks via replication fork reversal (RFR). RuvA specifically binds to HJ cruciform DNA, conferring on it an open structure. The RuvB hexamer acts as an ATP-dependent pump, pulling dsDNA into and through the RuvAB complex. HJ branch migration allows RuvC to scan DNA until it finds its consensus sequence, where it cleaves and resolves the cruciform DNA. This chain is Holliday junction branch migration complex subunit RuvA, found in Tolumonas auensis (strain DSM 9187 / NBRC 110442 / TA 4).